The sequence spans 901 residues: Serine/threonine-protein kinase-like protein CR4 (901 aa).

The signal sequence occupies residues 1 to 22; that stretch reads MDIVPVVALCCCLVLLPSWAYG. Tandem repeats lie at residues 31–66, 70–105, 123–158, 160–193, 201–234, 251–285, and 290–328. The segment at 31-328 is 7 X 36 AA repeats; sequence VSYGEDGPVF…PLALPMAVSP (298 aa). Residues Asn-149 and Asn-177 are each glycosylated (N-linked (GlcNAc...) asparagine). Residue Asn-280 is glycosylated (N-linked (GlcNAc...) asparagine). Residues 335 to 389 form a TNFR-Cys repeat; it reads SCSHGYYEYANHGEVGSGSKTCKPANSRLCLPCSVGCPDDSYESSPCNATADRVC. 3 cysteine pairs are disulfide-bonded: Cys-336–Cys-364, Cys-367–Cys-381, and Cys-371–Cys-389. The N-linked (GlcNAc...) asparagine glycan is linked to Asn-382. Residues 423 to 443 form a helical membrane-spanning segment; it reads IFVAEIAFAVILVFSVTAIAC. Positions 504–781 constitute a Protein kinase domain; sequence FSEDSQVGKG…KVTTALERAL (278 aa). ATP is bound by residues 510–518 and Lys-532; that span reads VGKGSFSCV. The Proton acceptor role is filled by Asp-633. Residues 845–901 form a disordered region; the sequence is VTSSQRRKSSASEADMDGRTTTDGRNVGSSIGDGLRSLEEEISPASPQENLYLQHNF. Over residues 889 to 901 the composition is skewed to polar residues; that stretch reads ASPQENLYLQHNF.

It belongs to the protein kinase superfamily. Ser/Thr protein kinase family. In terms of assembly, homodimer. Post-translationally, autophosphorylated. In terms of tissue distribution, specifically expressed in the epidermal cells of paleas and lemmas.

It is found in the cell membrane. It localises to the endosome. The protein resides in the multivesicular body membrane. It catalyses the reaction L-seryl-[protein] + ATP = O-phospho-L-seryl-[protein] + ADP + H(+). The enzyme catalyses L-threonyl-[protein] + ATP = O-phospho-L-threonyl-[protein] + ADP + H(+). Receptor protein kinase. Could play a role in a differentiation signal. Controls formative cell division in meristems. Regulates epidermal cell differentiation in many organs. During floral organogenesis, required to maintain the interlocking of the palea and lemma, and fertility. Triggers culm elongation. This is Serine/threonine-protein kinase-like protein CR4 from Oryza sativa subsp. japonica (Rice).